Reading from the N-terminus, the 153-residue chain is Endoribonuclease YbeY (153 aa).

Residues His114, His118, and His124 each contribute to the Zn(2+) site.

This sequence belongs to the endoribonuclease YbeY family. Zn(2+) serves as cofactor.

It localises to the cytoplasm. Its function is as follows. Single strand-specific metallo-endoribonuclease involved in late-stage 70S ribosome quality control and in maturation of the 3' terminus of the 16S rRNA. The polypeptide is Endoribonuclease YbeY (Shewanella oneidensis (strain ATCC 700550 / JCM 31522 / CIP 106686 / LMG 19005 / NCIMB 14063 / MR-1)).